The primary structure comprises 443 residues: Threonine/serine transporter TdcC (443 aa).

Transmembrane regions (helical) follow at residues threonine 22–isoleucine 42, alanine 44–phenylalanine 64, glycine 97–valine 117, valine 140–methionine 160, valine 163–isoleucine 183, isoleucine 207–isoleucine 227, alanine 259–serine 279, alanine 319–leucine 339, isoleucine 366–leucine 386, isoleucine 389–isoleucine 409, and aspartate 423–phenylalanine 443.

This sequence belongs to the amino acid/polyamine transporter 2 family. SdaC/TdcC subfamily.

The protein resides in the cell inner membrane. The enzyme catalyses L-threonine(in) + H(+)(in) = L-threonine(out) + H(+)(out). It catalyses the reaction L-serine(in) + H(+)(in) = L-serine(out) + H(+)(out). Involved in the import of threonine and serine into the cell, with the concomitant import of a proton (symport system). The chain is Threonine/serine transporter TdcC from Salmonella arizonae (strain ATCC BAA-731 / CDC346-86 / RSK2980).